Reading from the N-terminus, the 496-residue chain is Apulose kinase (496 aa).

ATP is bound by residues 13–15 (TTN), Thr267, Gly308, and 408–412 (GATQN).

This sequence belongs to the FGGY kinase family.

It carries out the reaction apulose + ATP = apulose 4-phosphate + ADP + H(+). It functions in the pathway carbohydrate metabolism. Its function is as follows. Involved in catabolism of D-apiose. Catalyzes phosphorylation of apulose to form apulose 4-phosphate. The protein is Apulose kinase of Pectobacterium atrosepticum (strain SCRI 1043 / ATCC BAA-672) (Erwinia carotovora subsp. atroseptica).